The primary structure comprises 400 residues: Lysophospholipid transporter LplT (400 aa).

Helical transmembrane passes span 19–39 (VIVA…ATLA), 53–73 (VLQM…GQMA), 91–111 (AGAA…LVGI), 139–159 (LMEA…GVLA), 164–184 (IAAL…NLFI), 195–213 (SWRL…VVLW), 227–247 (LFWG…PVAL), 257–277 (YLNA…AKLV), 281–301 (TVSR…IFSL), 304–324 (ALLP…FFVV), 352–372 (NSAM…GVPA), and 373–393 (VAIG…LWIW).

The protein belongs to the major facilitator superfamily. LplT (TC 2.A.1.42) family.

It is found in the cell inner membrane. In terms of biological role, catalyzes the facilitated diffusion of 2-acyl-glycero-3-phosphoethanolamine (2-acyl-GPE) into the cell. The protein is Lysophospholipid transporter LplT of Salmonella enteritidis PT4 (strain P125109).